Consider the following 649-residue polypeptide: Putative cystathionine gamma-synthase YML082W (649 aa).

Positions 242-273 are disordered; that stretch reads NEANHGEDHDGGISGEVDSQEEPHNGLVSTIP. Position 287 is a phosphoserine (serine 287). Lysine 451 carries the N6-(pyridoxal phosphate)lysine modification.

It belongs to the trans-sulfuration enzymes family. MET7 subfamily. Requires pyridoxal 5'-phosphate as cofactor.

It catalyses the reaction O-succinyl-L-homoserine + L-cysteine = L,L-cystathionine + succinate + H(+). It functions in the pathway amino-acid biosynthesis; L-methionine biosynthesis via de novo pathway; L-cystathionine from O-succinyl-L-homoserine: step 1/1. Functionally, catalyzes the formation of L-cystathionine from O-succinyl-L-homoserine (OSHS) and L-cysteine, via a gamma-replacement reaction. In the absence of thiol, catalyzes gamma-elimination to form 2-oxobutanoate, succinate and ammonia. This Saccharomyces cerevisiae (strain ATCC 204508 / S288c) (Baker's yeast) protein is Putative cystathionine gamma-synthase YML082W.